The following is a 175-amino-acid chain: NADH-ubiquinone oxidoreductase chain 6 (175 aa).

5 helical membrane passes run 1-21 (MMTYIVFILSIIFVISFVGFS), 25-45 (SPIYGGLVLIISGAVGCGIVL), 47-67 (FGGSFLGLMVFLIYLGGMLVV), 88-108 (AVLGAFVMGLLSELLLACYIL), and 149-169 (YGTWLVIVTGWSLFIGVLVIM).

The protein belongs to the complex I subunit 6 family. In terms of assembly, core subunit of respiratory chain NADH dehydrogenase (Complex I) which is composed of 45 different subunits.

It is found in the mitochondrion inner membrane. It carries out the reaction a ubiquinone + NADH + 5 H(+)(in) = a ubiquinol + NAD(+) + 4 H(+)(out). Functionally, core subunit of the mitochondrial membrane respiratory chain NADH dehydrogenase (Complex I) which catalyzes electron transfer from NADH through the respiratory chain, using ubiquinone as an electron acceptor. Essential for the catalytic activity and assembly of complex I. This chain is NADH-ubiquinone oxidoreductase chain 6 (MT-ND6), found in Halichoerus grypus (Gray seal).